The sequence spans 164 residues: Lipoprotein signal peptidase (164 aa).

The next 2 helical transmembrane spans lie at 68–88 (TILV…LWNA) and 96–116 (FWGL…RAMF). Residues Asp121 and Asp139 contribute to the active site. A helical transmembrane segment spans residues 134–154 (TFNVADSAIVVGSCLLLIDLL).

The protein belongs to the peptidase A8 family.

It is found in the cell inner membrane. The enzyme catalyses Release of signal peptides from bacterial membrane prolipoproteins. Hydrolyzes -Xaa-Yaa-Zaa-|-(S,diacylglyceryl)Cys-, in which Xaa is hydrophobic (preferably Leu), and Yaa (Ala or Ser) and Zaa (Gly or Ala) have small, neutral side chains.. Its pathway is protein modification; lipoprotein biosynthesis (signal peptide cleavage). In terms of biological role, this protein specifically catalyzes the removal of signal peptides from prolipoproteins. The chain is Lipoprotein signal peptidase from Solibacter usitatus (strain Ellin6076).